The primary structure comprises 237 residues: Ribonuclease PH (237 aa).

Residues Arg-86 and 124 to 126 each bind phosphate; that span reads GTR.

It belongs to the RNase PH family. Homohexameric ring arranged as a trimer of dimers.

The catalysed reaction is tRNA(n+1) + phosphate = tRNA(n) + a ribonucleoside 5'-diphosphate. Its function is as follows. Phosphorolytic 3'-5' exoribonuclease that plays an important role in tRNA 3'-end maturation. Removes nucleotide residues following the 3'-CCA terminus of tRNAs; can also add nucleotides to the ends of RNA molecules by using nucleoside diphosphates as substrates, but this may not be physiologically important. Probably plays a role in initiation of 16S rRNA degradation (leading to ribosome degradation) during starvation. This chain is Ribonuclease PH, found in Methylobacterium sp. (strain 4-46).